The following is a 444-amino-acid chain: ATP-dependent protease ATPase subunit HslU (444 aa).

ATP contacts are provided by residues V18, 60-65, D258, E323, and R395; that span reads GVGKTE.

The protein belongs to the ClpX chaperone family. HslU subfamily. A double ring-shaped homohexamer of HslV is capped on each side by a ring-shaped HslU homohexamer. The assembly of the HslU/HslV complex is dependent on binding of ATP.

Its subcellular location is the cytoplasm. Functionally, ATPase subunit of a proteasome-like degradation complex; this subunit has chaperone activity. The binding of ATP and its subsequent hydrolysis by HslU are essential for unfolding of protein substrates subsequently hydrolyzed by HslV. HslU recognizes the N-terminal part of its protein substrates and unfolds these before they are guided to HslV for hydrolysis. The polypeptide is ATP-dependent protease ATPase subunit HslU (Thioalkalivibrio sulfidiphilus (strain HL-EbGR7)).